A 314-amino-acid polypeptide reads, in one-letter code: Elongation factor Ts (314 aa).

Residues 82–85 form an involved in Mg(2+) ion dislocation from EF-Tu region; that stretch reads TDFV.

Belongs to the EF-Ts family.

It localises to the cytoplasm. Associates with the EF-Tu.GDP complex and induces the exchange of GDP to GTP. It remains bound to the aminoacyl-tRNA.EF-Tu.GTP complex up to the GTP hydrolysis stage on the ribosome. The sequence is that of Elongation factor Ts from Nostoc punctiforme (strain ATCC 29133 / PCC 73102).